We begin with the raw amino-acid sequence, 122 residues long: Large ribosomal subunit protein uL14c (122 aa).

The protein belongs to the universal ribosomal protein uL14 family. In terms of assembly, part of the 50S ribosomal subunit.

Its subcellular location is the plastid. Its function is as follows. Binds to 23S rRNA. This chain is Large ribosomal subunit protein uL14c, found in Cuscuta obtusiflora (Peruvian dodder).